A 366-amino-acid chain; its full sequence is UDP-N-acetylenolpyruvoylglucosamine reductase (366 aa).

One can recognise an FAD-binding PCMH-type domain in the interval 29–203 (VGPVARTLVT…LEVEFALDAS (175 aa)). The active site involves arginine 177. The Proton donor role is filled by serine 258. Glutamate 358 is an active-site residue.

This sequence belongs to the MurB family. FAD serves as cofactor.

It is found in the cytoplasm. The enzyme catalyses UDP-N-acetyl-alpha-D-muramate + NADP(+) = UDP-N-acetyl-3-O-(1-carboxyvinyl)-alpha-D-glucosamine + NADPH + H(+). Its pathway is cell wall biogenesis; peptidoglycan biosynthesis. In terms of biological role, cell wall formation. This is UDP-N-acetylenolpyruvoylglucosamine reductase from Mycobacterium ulcerans (strain Agy99).